Here is a 445-residue protein sequence, read N- to C-terminus: Histidinol dehydrogenase (445 aa).

The NAD(+) site is built by Y144, Q205, and N228. Positions 251, 273, and 276 each coordinate substrate. Residues Q273 and H276 each contribute to the Zn(2+) site. Residues E341 and H342 each act as proton acceptor in the active site. Residues H342, D375, E429, and H434 each contribute to the substrate site. Position 375 (D375) interacts with Zn(2+). H434 lines the Zn(2+) pocket.

The protein belongs to the histidinol dehydrogenase family. Zn(2+) serves as cofactor.

The catalysed reaction is L-histidinol + 2 NAD(+) + H2O = L-histidine + 2 NADH + 3 H(+). It participates in amino-acid biosynthesis; L-histidine biosynthesis; L-histidine from 5-phospho-alpha-D-ribose 1-diphosphate: step 9/9. Its function is as follows. Catalyzes the sequential NAD-dependent oxidations of L-histidinol to L-histidinaldehyde and then to L-histidine. In Cupriavidus pinatubonensis (strain JMP 134 / LMG 1197) (Cupriavidus necator (strain JMP 134)), this protein is Histidinol dehydrogenase.